Consider the following 298-residue polypeptide: Ribosomal RNA small subunit methyltransferase H (298 aa).

S-adenosyl-L-methionine contacts are provided by residues 35 to 37, D55, F82, D100, and Q107; that span reads GGH.

This sequence belongs to the methyltransferase superfamily. RsmH family.

The protein resides in the cytoplasm. The enzyme catalyses cytidine(1402) in 16S rRNA + S-adenosyl-L-methionine = N(4)-methylcytidine(1402) in 16S rRNA + S-adenosyl-L-homocysteine + H(+). In terms of biological role, specifically methylates the N4 position of cytidine in position 1402 (C1402) of 16S rRNA. This Chlamydia abortus (strain DSM 27085 / S26/3) (Chlamydophila abortus) protein is Ribosomal RNA small subunit methyltransferase H.